We begin with the raw amino-acid sequence, 350 residues long: DNA polymerase delta subunit 3 (350 aa).

Residues 131 to 350 are disordered; the sequence is EEKSKPLVRP…LESFFKRKAK (220 aa). Basic and acidic residues-rich tracts occupy residues 146–162 and 172–195; these read TTPE…KDMG and MKKD…EENL. Thr-223 carries the phosphothreonine modification. The residue at position 230 (Ser-230) is a Phosphoserine. A compositionally biased stretch (basic and acidic residues) spans 234 to 248; it reads SPKETDSNDKDKNND. Positions 249 to 262 are enriched in acidic residues; sequence DLEDLLETTAEDSL. Residues 274 to 286 are compositionally biased toward basic and acidic residues; sequence SETEHSKEPKSEE. Residues 320–332 are compositionally biased toward polar residues; that stretch reads LSSSKKQETPSSN.

In terms of assembly, DNA polymerase delta is a heterotrimer of POL3, POL32 and HYS2. POL32 can form homodimers.

Its subcellular location is the nucleus. Its function is as follows. DNA polymerase delta (DNA polymerase III) participates in chromosomal DNA replication. It is required during synthesis of the leading and lagging DNA strands at the replication fork and binds at/or near replication origins and moves along DNA with the replication fork. It has 3'-5' proofreading exonuclease activity that correct errors arising during DNA replication. It is also involved in DNA synthesis during DNA repair. In Saccharomyces cerevisiae (strain ATCC 204508 / S288c) (Baker's yeast), this protein is DNA polymerase delta subunit 3 (POL32).